The primary structure comprises 1059 residues: Carbamoyl phosphate synthase large chain (1059 aa).

The segment at 1 to 401 (MPKRKDIQKV…AMLKAVRSLE (401 aa)) is carboxyphosphate synthetic domain. ATP contacts are provided by Arg-129, Arg-169, Gly-175, Gly-176, Arg-208, Ile-210, Glu-215, Gly-241, Val-242, His-243, Gln-284, and Glu-298. One can recognise an ATP-grasp 1 domain in the interval 133-327 (KALMERLNEP…IAKMAAKIAV (195 aa)). 3 residues coordinate Mg(2+): Gln-284, Glu-298, and Asn-300. Mn(2+) contacts are provided by Gln-284, Glu-298, and Asn-300. Residues 402–546 (IGVTGLNDLT…YATYERENES (145 aa)) form an oligomerization domain region. The tract at residues 547–929 (VRSKKPSVIV…ALYKAFVASN (383 aa)) is carbamoyl phosphate synthetic domain. The ATP-grasp 2 domain occupies 671 to 861 (DQVIKTLALP…LAQLATRVML (191 aa)). Residues Arg-707, Ser-746, Leu-748, Glu-752, Gly-777, Val-778, His-779, Ser-780, Gln-820, and Glu-832 each coordinate ATP. 3 residues coordinate Mg(2+): Gln-820, Glu-832, and Asn-834. The Mn(2+) site is built by Gln-820, Glu-832, and Asn-834. In terms of domain architecture, MGS-like spans 930–1059 (IKVPQYGNVL…SRSFTVNEMK (130 aa)). Residues 930–1059 (IKVPQYGNVL…SRSFTVNEMK (130 aa)) form an allosteric domain region.

This sequence belongs to the CarB family. As to quaternary structure, composed of two chains; the small (or glutamine) chain promotes the hydrolysis of glutamine to ammonia, which is used by the large (or ammonia) chain to synthesize carbamoyl phosphate. Tetramer of heterodimers (alpha,beta)4. Mg(2+) serves as cofactor. Requires Mn(2+) as cofactor.

It catalyses the reaction hydrogencarbonate + L-glutamine + 2 ATP + H2O = carbamoyl phosphate + L-glutamate + 2 ADP + phosphate + 2 H(+). The catalysed reaction is hydrogencarbonate + NH4(+) + 2 ATP = carbamoyl phosphate + 2 ADP + phosphate + 2 H(+). It functions in the pathway amino-acid biosynthesis; L-arginine biosynthesis; carbamoyl phosphate from bicarbonate: step 1/1. Its pathway is pyrimidine metabolism; UMP biosynthesis via de novo pathway; (S)-dihydroorotate from bicarbonate: step 1/3. Large subunit of the glutamine-dependent carbamoyl phosphate synthetase (CPSase). CPSase catalyzes the formation of carbamoyl phosphate from the ammonia moiety of glutamine, carbonate, and phosphate donated by ATP, constituting the first step of 2 biosynthetic pathways, one leading to arginine and/or urea and the other to pyrimidine nucleotides. The large subunit (synthetase) binds the substrates ammonia (free or transferred from glutamine from the small subunit), hydrogencarbonate and ATP and carries out an ATP-coupled ligase reaction, activating hydrogencarbonate by forming carboxy phosphate which reacts with ammonia to form carbamoyl phosphate. This chain is Carbamoyl phosphate synthase large chain, found in Leuconostoc citreum (strain KM20).